We begin with the raw amino-acid sequence, 305 residues long: MSKSVGVAPHNIVNKSGLHWRDYYEMTKPKVVMLLLLTALVGMCLASETWISWKILLAGLTGIGFLSSAAAVINHVVDRKIDAQMARTSNRPMPKGKVSPQRALVFAGVLTVVGYLILELWVNRLTALLTLASLVGYAFIYTMYLKRATPQNIVIGGLAGAAPPLLGWTAVTNDIHAHALLLVLIIFIWTPPHFWALAIHREKDYARAKIPMLPCTHGIEFTKTSILLYTVLLALISVLPYLIGMTGAIYLLGSSALNAGFLYYAWKLKFASDEHTAMKTFKFSIIHLMVLFVVLLVDHYMRFTF.

The next 8 membrane-spanning stretches (helical) occupy residues 31–51 (VVML…ETWI), 53–73 (WKIL…AAVI), 103–123 (ALVF…LWVN), 125–145 (LTAL…TMYL), 152–172 (NIVI…TAVT), 179–199 (ALLL…ALAI), 231–251 (VLLA…AIYL), and 277–297 (AMKT…VLLV).

This sequence belongs to the UbiA prenyltransferase family. Protoheme IX farnesyltransferase subfamily.

It localises to the cell inner membrane. The catalysed reaction is heme b + (2E,6E)-farnesyl diphosphate + H2O = Fe(II)-heme o + diphosphate. Its pathway is porphyrin-containing compound metabolism; heme O biosynthesis; heme O from protoheme: step 1/1. Functionally, converts heme B (protoheme IX) to heme O by substitution of the vinyl group on carbon 2 of heme B porphyrin ring with a hydroxyethyl farnesyl side group. The sequence is that of Protoheme IX farnesyltransferase 2 from Pseudoalteromonas atlantica (strain T6c / ATCC BAA-1087).